A 98-amino-acid chain; its full sequence is Nuclear protein 2 (98 aa).

The span at 1-11 (MEPAAPTVQPR) shows a compositional bias: low complexity. Disordered stretches follow at residues 1–24 (MEPA…PPVG) and 78–98 (LNSQ…TRLT). Basic residues predominate over residues 81–98 (QRKRRQRQLQPRPRTRLT).

It belongs to the NUPR family.

The protein resides in the nucleus. Its function is as follows. Acts as a transcriptional repressor by inhibiting gene expression at the NUPR1 promoter in a p53/TP53-dependent manner in cancer cells. Involved in the G1 cell cycle arrest, and in a decrease in cell viability and cell proliferation. Plays a role as a negative regulator of the protumoral factor NUPR1. In Bos taurus (Bovine), this protein is Nuclear protein 2.